A 428-amino-acid polypeptide reads, in one-letter code: tRNA(Ile2) 2-agmatinylcytidine synthetase TiaS (428 aa).

Belongs to the TiaS family.

The protein resides in the cytoplasm. The catalysed reaction is cytidine(34) in tRNA(Ile2) + agmatine + ATP + H2O = 2-agmatinylcytidine(34) in tRNA(Ile2) + AMP + 2 phosphate + 2 H(+). Its function is as follows. ATP-dependent agmatine transferase that catalyzes the formation of 2-agmatinylcytidine (agm2C) at the wobble position (C34) of tRNA(Ile2), converting the codon specificity from AUG to AUA. This chain is tRNA(Ile2) 2-agmatinylcytidine synthetase TiaS, found in Methanosarcina mazei (strain ATCC BAA-159 / DSM 3647 / Goe1 / Go1 / JCM 11833 / OCM 88) (Methanosarcina frisia).